A 309-amino-acid chain; its full sequence is UDP-3-O-acyl-N-acetylglucosamine deacetylase (309 aa).

Zn(2+)-binding residues include His78, His237, and Asp241. His264 functions as the Proton donor in the catalytic mechanism.

The protein belongs to the LpxC family. Zn(2+) is required as a cofactor.

The enzyme catalyses a UDP-3-O-[(3R)-3-hydroxyacyl]-N-acetyl-alpha-D-glucosamine + H2O = a UDP-3-O-[(3R)-3-hydroxyacyl]-alpha-D-glucosamine + acetate. It participates in glycolipid biosynthesis; lipid IV(A) biosynthesis; lipid IV(A) from (3R)-3-hydroxytetradecanoyl-[acyl-carrier-protein] and UDP-N-acetyl-alpha-D-glucosamine: step 2/6. Its function is as follows. Catalyzes the hydrolysis of UDP-3-O-myristoyl-N-acetylglucosamine to form UDP-3-O-myristoylglucosamine and acetate, the committed step in lipid A biosynthesis. The polypeptide is UDP-3-O-acyl-N-acetylglucosamine deacetylase (Methylobacillus flagellatus (strain ATCC 51484 / DSM 6875 / VKM B-1610 / KT)).